The chain runs to 1312 residues: uncharacterized protein (1312 aa).

The first 20 residues, 1–20 (MRNNLIYTMFLSCLHFETFC), serve as a signal peptide directing secretion. Residues 299-344 (TTTSSSTMLSSTTLLTTETETRESSSTGSTQTTTPSTEPSTTITTP) are compositionally biased toward low complexity. 8 disordered regions span residues 299–503 (TTTS…TTTY), 565–609 (EITS…PTGG), 645–692 (KETR…PTGG), 749–775 (SSSSKFSITPTPTPSSGTTTYNWPTGG), 812–864 (KTRT…GGTT), 899–942 (KTRT…PTGG), 1048–1079 (KTRTETTSDAQGCKATSTTQTPTTFNWPTGGT), and 1114–1165 (NTTR…TLET). Polar residues predominate over residues 345–357 (MEQSSTVSSVQKT). Low complexity predominate over residues 365–503 (SSSTTVPTSA…STPATPTTTY (139 aa)). Positions 565–574 (EITSDAEGCK) are enriched in basic and acidic residues. Positions 576–609 (TSSTPTPSSTSVHSTTATPSTTPGTTTYNWPTGG) are enriched in low complexity. The span at 645 to 659 (KETRTETTTDADGCK) shows a compositional bias: basic and acidic residues. A compositionally biased stretch (low complexity) spans 660-692 (KTSSTSSSTPSLKHSTTPTPTPGTTTYNWPTGG). A compositionally biased stretch (basic and acidic residues) spans 813–825 (TRTETTTDAEGCK). A compositionally biased stretch (low complexity) spans 826–864 (KTSSTSKISTTPTSPTSSKPTPTSTSMTTTYNWPTGGTT). Over residues 899–908 (KTRTETTTDA) the composition is skewed to polar residues. Residues 914 to 942 (TSSTSLKPTSPSSSTASPPTTTYNWPTGG) are compositionally biased toward low complexity. The segment covering 1048 to 1057 (KTRTETTSDA) has biased composition (polar residues). Residues 1063–1076 (TSTTQTPTTFNWPT) are compositionally biased toward low complexity. The segment covering 1114–1123 (NTTRTETTSD) has biased composition (polar residues). Over residues 1130-1154 (TSSGTTSTMSPGTTGGTTVSRTTNS) the composition is skewed to low complexity. The segment covering 1155-1164 (NNPIDSSTLE) has biased composition (polar residues). Residues 1239–1306 (ATCSSLNLNL…WSGTPEKCVA (68 aa)) enclose the Sushi domain. 2 disulfide bridges follow: C1241/C1291 and C1273/C1304.

It localises to the secreted. This is an uncharacterized protein from Caenorhabditis elegans.